Reading from the N-terminus, the 258-residue chain is Regulatory protein RecX (258 aa).

This sequence belongs to the RecX family.

It localises to the cytoplasm. Modulates RecA activity. This Streptococcus pyogenes serotype M2 (strain MGAS10270) protein is Regulatory protein RecX.